Consider the following 276-residue polypeptide: Ribosomal RNA small subunit methyltransferase A (276 aa).

Asn-27, Leu-29, Gly-54, Glu-75, Asp-101, and Asn-123 together coordinate S-adenosyl-L-methionine.

The protein belongs to the class I-like SAM-binding methyltransferase superfamily. rRNA adenine N(6)-methyltransferase family. RsmA subfamily.

The protein localises to the cytoplasm. It carries out the reaction adenosine(1518)/adenosine(1519) in 16S rRNA + 4 S-adenosyl-L-methionine = N(6)-dimethyladenosine(1518)/N(6)-dimethyladenosine(1519) in 16S rRNA + 4 S-adenosyl-L-homocysteine + 4 H(+). Functionally, specifically dimethylates two adjacent adenosines (A1518 and A1519) in the loop of a conserved hairpin near the 3'-end of 16S rRNA in the 30S particle. May play a critical role in biogenesis of 30S subunits. The chain is Ribosomal RNA small subunit methyltransferase A from Bartonella henselae (strain ATCC 49882 / DSM 28221 / CCUG 30454 / Houston 1) (Rochalimaea henselae).